The sequence spans 176 residues: Large ribosomal subunit protein uL16 (176 aa).

The protein belongs to the universal ribosomal protein uL16 family.

This Thermoplasma volcanium (strain ATCC 51530 / DSM 4299 / JCM 9571 / NBRC 15438 / GSS1) protein is Large ribosomal subunit protein uL16.